Reading from the N-terminus, the 417-residue chain is NADH-quinone oxidoreductase subunit D (417 aa).

This sequence belongs to the complex I 49 kDa subunit family. NDH-1 is composed of 14 different subunits. Subunits NuoB, C, D, E, F, and G constitute the peripheral sector of the complex.

It is found in the cell inner membrane. It carries out the reaction a quinone + NADH + 5 H(+)(in) = a quinol + NAD(+) + 4 H(+)(out). In terms of biological role, NDH-1 shuttles electrons from NADH, via FMN and iron-sulfur (Fe-S) centers, to quinones in the respiratory chain. The immediate electron acceptor for the enzyme in this species is believed to be ubiquinone. Couples the redox reaction to proton translocation (for every two electrons transferred, four hydrogen ions are translocated across the cytoplasmic membrane), and thus conserves the redox energy in a proton gradient. The chain is NADH-quinone oxidoreductase subunit D from Ruthia magnifica subsp. Calyptogena magnifica.